A 341-amino-acid polypeptide reads, in one-letter code: NADH-ubiquinone oxidoreductase chain 2 (341 aa).

9 consecutive transmembrane segments (helical) span residues 8 to 28 (ILFI…NSWL), 60 to 80 (YFLT…LLML), 95 to 115 (MIIM…FWFP), 121 to 141 (LTWM…LMLI), 146 to 166 (IKYL…IGGL), 195 to 215 (SIWL…TFMF), 238 to 258 (FTLF…GFLP), 273 to 293 (FMLT…LRIC), and 321 to 341 (MIMT…YFMF).

This sequence belongs to the complex I subunit 2 family.

It localises to the mitochondrion inner membrane. It carries out the reaction a ubiquinone + NADH + 5 H(+)(in) = a ubiquinol + NAD(+) + 4 H(+)(out). In terms of biological role, core subunit of the mitochondrial membrane respiratory chain NADH dehydrogenase (Complex I) that is believed to belong to the minimal assembly required for catalysis. Complex I functions in the transfer of electrons from NADH to the respiratory chain. The immediate electron acceptor for the enzyme is believed to be ubiquinone. The protein is NADH-ubiquinone oxidoreductase chain 2 (mt:ND2) of Drosophila melanogaster (Fruit fly).